Consider the following 161-residue polypeptide: MSQLTHINAAGEAHMVDVSAKAETVREARAEAFVTMRSETLAMIVDGKHHKGDVFATARIAGIQAAKRTWELIPLCHPLLLSKVEIQLQAEPEHNRVRIESLCRLTGKTGVEMEALTAASVAALTIYDMCKAVQKDMVIGPVRLLAKSGGKSGDFKVDAHD.

Substrate-binding positions include 75-77 (LCH) and 113-114 (ME). Asp128 is an active-site residue.

Belongs to the MoaC family. Homohexamer; trimer of dimers.

It carries out the reaction (8S)-3',8-cyclo-7,8-dihydroguanosine 5'-triphosphate = cyclic pyranopterin phosphate + diphosphate. Its pathway is cofactor biosynthesis; molybdopterin biosynthesis. In terms of biological role, catalyzes the conversion of (8S)-3',8-cyclo-7,8-dihydroguanosine 5'-triphosphate to cyclic pyranopterin monophosphate (cPMP). In Salmonella heidelberg (strain SL476), this protein is Cyclic pyranopterin monophosphate synthase.